A 1421-amino-acid chain; its full sequence is MVSFFKTPIIIFFFLLCLNEKVLCSINENENLGENKNENANVNTPENLNKLLNEYDNIEQLKSMIGNDELHKNLTILEKLILESLEKDKLKYPLLKQGTEQLIDISKFNKKNITDADDETYIIPTVQSSFHDIVKYEHLIKEQSIEIYNSDISDKIKKKIFIVRTLKTIKLMLIPLNSYKQNNDLKSALEELNNVFTNKEAQKESSPIGDHGTFFRKLLTHVRTIKENEDIENKGETLILGDNKIDVMNSNDFFFTTNSNVKFMENLDDITNEYGLGLINHLGPHLIALGHFVVLKLALKNYKNYFEAKNIKFFSWQKILEFSMSDRFKVLDMMCNHESVYYSEKKRRKTYLKVDRSSTSMECNILEYLLHYFNKYQLEIIKTTQDTDFDLHGMMEHKYIKDYFFSFMCNDPKECIIYHTNQFKKEANEENTFPEQEEPNRQISAFNLYLNYYYFMKRYSSYGTKKTLYVHLLNLTGLLNHDTRAYVTSLYLPGYYNAVEMSFTDDKEFSTLFESLIQCIEKCHSDQARQISKDSNLLNNITKCDLCKGAFLYANMKFDEVPSMLQKFYVYLTKGLKIQKVSSLIKTLDIYQDYSNFLSHDINWYTFLFLFRLTSFKEIANKNVAEAMYLNIKDEDTFNKTIVTNYWYPSPIKKYYTLYVRKHIPNNLVDELEKLMKSGTLEKMKKSLTFLVHVNSFLQLDFFHQLNEPPLGLPRSYPLSLVLEHKFKEWMDSSPAGFYFSNYQNPYIRKDLHDKVLSQKFEPPKMNQWNKVLKSLIECAYDMYFEQRHVKNLYKYHNIYNINNKLMLMRDSIDLYKNNFDDVLFFADIFNMRKYMTATPVYKKVKDRVYHTLHSITGNSVNFYKYGIIYGFKVNKEILKEVVDELYSIYNFNTDIFTDTSFLQTVYLLFRRIEETYRTQRRDDKISVNNVFFMNVANNYSKLNKEEREIEIHNSMASRYYAKTMFAAFQMLFSTMLSNNVDNLDKAYGLSENIQVATSTSAFLTFAYVYNGSIMDSVTNSLLPPYAKKPITQLKYGKTFVFSNYFMLASKMYDMLNYKNLSLLCEYQAVASANFYSAKKVGQFLGRKFLPITTYFLVMRISWTHAFTTGSHLITYFDPPNTNPSTLPNCASGKNKSPESFFFTHALAAEASKYLFFYFFTNLYLDAYKSFPGGFGPAIKEQTQHVQEQTYERKPSVHSFNRNFFMELANGFMYAFCFFAISQMYAYFENINFYITSNFRFLDRYYGVFNKYFINYAIIKLKEITSDLLIKYEREAYLNMKKYGYLGEVIAARLSPKDKIMNYLHETNDDVMSNLRRYDMENAFKNKMVTYVDDFAFFDDCGKNEQFLNERCDYCPVIEEVEETELFTTTGDKNTNETTEIKKQTSTYIDTEKMNEADSADSDDEKDFDTPDNELMIARFH.

The N-terminal stretch at 1 to 24 (MVSFFKTPIIIFFFLLCLNEKVLC) is a signal peptide. Cystine bridges form between C335–C363, C409–C415, C519–C547, and C523–C544. Residues 1203–1223 (NFFMELANGFMYAFCFFAISQ) form a helical membrane-spanning segment. A disulfide bridge links C1352 with C1355. The interval 1371–1413 (GDKNTNETTEIKKQTSTYIDTEKMNEADSADSDDEKDFDTPDN) is disordered. The span at 1398–1412 (DSADSDDEKDFDTPD) shows a compositional bias: acidic residues.

As to quaternary structure, component of the RhopH complex. RhopH complex is at least composed of CLAG3.1/CLAG3.2, RhopH2 and RhopH3 with a 1:1:1 subunit stoichiometry. CLAG3.1/CLAG3.2 mediates subunit association through independent contacts with RhopH2 and RhopH3, which do not directly interact with one another. Interacts with RhopH2. Interacts with RhopH3.

The protein resides in the host cell membrane. It is found in the parasitophorous vacuole membrane. It localises to the host cytoplasm. Its subcellular location is the cytoplasmic vesicle. The protein localises to the secretory vesicle. The protein resides in the rhoptry. Participates in the formation of new permeability pathways in Plasmodium-infected erythrocytes enabling the uptake of nutrients from the blood plasma. The sequence is that of Cytoadherence-linked asexual protein 3.2 from Plasmodium falciparum.